Consider the following 483-residue polypeptide: tRNA sulfurtransferase (483 aa).

Positions 62-166 (PQICDALTRV…QDKLTLIKAR (105 aa)) constitute a THUMP domain. ATP contacts are provided by residues 184–185 (LI), Lys-266, Gly-288, and Gln-297. Cys-345 and Cys-457 are disulfide-bonded. The 79-residue stretch at 405–483 (LADTDVLLDI…GYTNVKVYRP (79 aa)) folds into the Rhodanese domain. Residue Cys-457 is the Cysteine persulfide intermediate of the active site.

It belongs to the ThiI family.

The protein localises to the cytoplasm. The enzyme catalyses [ThiI sulfur-carrier protein]-S-sulfanyl-L-cysteine + a uridine in tRNA + 2 reduced [2Fe-2S]-[ferredoxin] + ATP + H(+) = [ThiI sulfur-carrier protein]-L-cysteine + a 4-thiouridine in tRNA + 2 oxidized [2Fe-2S]-[ferredoxin] + AMP + diphosphate. It catalyses the reaction [ThiS sulfur-carrier protein]-C-terminal Gly-Gly-AMP + S-sulfanyl-L-cysteinyl-[cysteine desulfurase] + AH2 = [ThiS sulfur-carrier protein]-C-terminal-Gly-aminoethanethioate + L-cysteinyl-[cysteine desulfurase] + A + AMP + 2 H(+). It functions in the pathway cofactor biosynthesis; thiamine diphosphate biosynthesis. Catalyzes the ATP-dependent transfer of a sulfur to tRNA to produce 4-thiouridine in position 8 of tRNAs, which functions as a near-UV photosensor. Also catalyzes the transfer of sulfur to the sulfur carrier protein ThiS, forming ThiS-thiocarboxylate. This is a step in the synthesis of thiazole, in the thiamine biosynthesis pathway. The sulfur is donated as persulfide by IscS. In Yersinia enterocolitica serotype O:8 / biotype 1B (strain NCTC 13174 / 8081), this protein is tRNA sulfurtransferase.